A 301-amino-acid polypeptide reads, in one-letter code: N-acetylmuramic acid 6-phosphate etherase (301 aa).

One can recognise an SIS domain in the interval 57–220; sequence IAEAFRQGGR…TTGAMIRTGK (164 aa). The active-site Proton donor is E85. The active site involves E116.

This sequence belongs to the GCKR-like family. MurNAc-6-P etherase subfamily. As to quaternary structure, homodimer.

It catalyses the reaction N-acetyl-D-muramate 6-phosphate + H2O = N-acetyl-D-glucosamine 6-phosphate + (R)-lactate. The protein operates within amino-sugar metabolism; 1,6-anhydro-N-acetylmuramate degradation. It participates in amino-sugar metabolism; N-acetylmuramate degradation. It functions in the pathway cell wall biogenesis; peptidoglycan recycling. In terms of biological role, specifically catalyzes the cleavage of the D-lactyl ether substituent of MurNAc 6-phosphate, producing GlcNAc 6-phosphate and D-lactate. Together with AnmK, is also required for the utilization of anhydro-N-acetylmuramic acid (anhMurNAc) either imported from the medium or derived from its own cell wall murein, and thus plays a role in cell wall recycling. The chain is N-acetylmuramic acid 6-phosphate etherase from Photorhabdus laumondii subsp. laumondii (strain DSM 15139 / CIP 105565 / TT01) (Photorhabdus luminescens subsp. laumondii).